A 156-amino-acid polypeptide reads, in one-letter code: ATP synthase subunit b (156 aa).

The helical transmembrane segment at 7-29 threads the bilayer; that stretch reads LIGQSVAFLIFVWFCMKFVWPPL.

This sequence belongs to the ATPase B chain family. In terms of assembly, F-type ATPases have 2 components, F(1) - the catalytic core - and F(0) - the membrane proton channel. F(1) has five subunits: alpha(3), beta(3), gamma(1), delta(1), epsilon(1). F(0) has three main subunits: a(1), b(2) and c(10-14). The alpha and beta chains form an alternating ring which encloses part of the gamma chain. F(1) is attached to F(0) by a central stalk formed by the gamma and epsilon chains, while a peripheral stalk is formed by the delta and b chains.

The protein resides in the cell inner membrane. Functionally, f(1)F(0) ATP synthase produces ATP from ADP in the presence of a proton or sodium gradient. F-type ATPases consist of two structural domains, F(1) containing the extramembraneous catalytic core and F(0) containing the membrane proton channel, linked together by a central stalk and a peripheral stalk. During catalysis, ATP synthesis in the catalytic domain of F(1) is coupled via a rotary mechanism of the central stalk subunits to proton translocation. In terms of biological role, component of the F(0) channel, it forms part of the peripheral stalk, linking F(1) to F(0). This is ATP synthase subunit b from Shewanella denitrificans (strain OS217 / ATCC BAA-1090 / DSM 15013).